The sequence spans 175 residues: Ribulose bisphosphate carboxylase small subunit, chloroplastic 2 (175 aa).

The N-terminal 46 residues, 1-46 (MAPTVMASSATSVAPFQGLKSTAGLPVSRRSTNSGFGNVSNGGRIK), are a transit peptide targeting the chloroplast.

Belongs to the RuBisCO small chain family. As to quaternary structure, heterohexadecamer of 8 large and 8 small subunits.

Its subcellular location is the plastid. It localises to the chloroplast. Its function is as follows. RuBisCO catalyzes two reactions: the carboxylation of D-ribulose 1,5-bisphosphate, the primary event in carbon dioxide fixation, as well as the oxidative fragmentation of the pentose substrate. Both reactions occur simultaneously and in competition at the same active site. Although the small subunit is not catalytic it is essential for maximal activity. This is Ribulose bisphosphate carboxylase small subunit, chloroplastic 2 from Oryza sativa subsp. japonica (Rice).